Consider the following 452-residue polypeptide: GTPase Der (452 aa).

EngA-type G domains follow at residues 4-169 (PIVA…PSPD) and 177-352 (INVS…EEHR). GTP is bound by residues 10–17 (GRPNVGKS), 57–61 (DTGGL), 120–123 (NKCE), 183–190 (GRPNVGKS), 230–234 (DTAGI), and 295–298 (NKWD). The region spanning 353 to 438 (RRVNTSVVNE…PIRLLWRGKK (86 aa)) is the KH-like domain.

This sequence belongs to the TRAFAC class TrmE-Era-EngA-EngB-Septin-like GTPase superfamily. EngA (Der) GTPase family. As to quaternary structure, associates with the 50S ribosomal subunit.

Its function is as follows. GTPase that plays an essential role in the late steps of ribosome biogenesis. This Crocosphaera subtropica (strain ATCC 51142 / BH68) (Cyanothece sp. (strain ATCC 51142)) protein is GTPase Der.